The primary structure comprises 324 residues: MTAHLKKAELHCHIEGATPPELALRQARKYSVDTSAIIRDKAYVWEDFTSFVRCYDSVASLFRTQGDYALLAETYLTELAEAGTIYSEIIVSPDHGNTIGLGADAYLEGLAAGMEAAKAKTGIESRMLITGIRHLGPESVAKTAEYAAMRRHPLVTGFNLAGEERMHSVAEFARAFDIVRDAGLGLTIHAGELSGAFSVRDALDHVRPARISHGVRAIEDADLVKRLAEEGVVLEVCPGSNVSLQVFADFASHPLRPLYEAGVRVTLNSDDPPFFHTSLAQEYEVAAHVMGFSDSDIDRMTKTAIEAAFVDEPTRERLLAALHV.

3 residues coordinate Zn(2+): H11, H13, and H189. The active-site Proton donor is the E192. A Zn(2+)-binding site is contributed by D270. Substrate is bound at residue D271.

It belongs to the metallo-dependent hydrolases superfamily. Adenosine and AMP deaminases family. Adenine deaminase type 2 subfamily. The cofactor is Zn(2+).

The enzyme catalyses adenine + H2O + H(+) = hypoxanthine + NH4(+). Its function is as follows. Catalyzes the hydrolytic deamination of adenine to hypoxanthine. Plays an important role in the purine salvage pathway and in nitrogen catabolism. This chain is Adenine deaminase, found in Sinorhizobium fredii (strain NBRC 101917 / NGR234).